Consider the following 274-residue polypeptide: uncharacterized protein (274 aa).

An N-terminal signal peptide occupies residues 1-21; the sequence is MRKLTLLPLLLIITGLLTVQA. Residues 249–266 form a helical membrane-spanning segment; sequence TSAFVILTASALIFIYLF.

The protein resides in the membrane. This is an uncharacterized protein from Archaeoglobus fulgidus (strain ATCC 49558 / DSM 4304 / JCM 9628 / NBRC 100126 / VC-16).